The following is a 413-amino-acid chain: Serine/threonine transporter SstT (413 aa).

Transmembrane regions (helical) follow at residues 22 to 42, 61 to 81, 89 to 109, 148 to 168, 189 to 209, 224 to 244, 305 to 325, 337 to 357, and 363 to 383; these read GLLLGLLLALIAPSLQGVLGF, AVAPILVFLLVISAIANKQLG, IVVLYLLGTFLAALTSVLFSF, ALFNANFIGILFWAIGLGIAL, IVHFIISFAPIGVFGLVAETL, LVVLIGSMLFTAFVINPILVF, MAGAAITITVLTLAAVHTLGI, VVASICACGASGVAGGSLLLI, and LFGIPNDIAAQVIGVGFVIGV.

It belongs to the dicarboxylate/amino acid:cation symporter (DAACS) (TC 2.A.23) family.

It is found in the cell inner membrane. It carries out the reaction L-serine(in) + Na(+)(in) = L-serine(out) + Na(+)(out). The catalysed reaction is L-threonine(in) + Na(+)(in) = L-threonine(out) + Na(+)(out). Its function is as follows. Involved in the import of serine and threonine into the cell, with the concomitant import of sodium (symport system). The sequence is that of Serine/threonine transporter SstT from Histophilus somni (strain 129Pt) (Haemophilus somnus).